A 242-amino-acid chain; its full sequence is Pyridoxine 5'-phosphate synthase (242 aa).

A 3-amino-2-oxopropyl phosphate-binding site is contributed by N6. A 1-deoxy-D-xylulose 5-phosphate-binding site is contributed by 8 to 9 (DH). A 3-amino-2-oxopropyl phosphate-binding site is contributed by R17. Catalysis depends on H42, which acts as the Proton acceptor. 1-deoxy-D-xylulose 5-phosphate contacts are provided by R44 and H49. E69 functions as the Proton acceptor in the catalytic mechanism. T99 lines the 1-deoxy-D-xylulose 5-phosphate pocket. H190 acts as the Proton donor in catalysis. 3-amino-2-oxopropyl phosphate is bound by residues G191 and 212–213 (GH).

This sequence belongs to the PNP synthase family. As to quaternary structure, homooctamer; tetramer of dimers.

The protein localises to the cytoplasm. It catalyses the reaction 3-amino-2-oxopropyl phosphate + 1-deoxy-D-xylulose 5-phosphate = pyridoxine 5'-phosphate + phosphate + 2 H2O + H(+). The protein operates within cofactor biosynthesis; pyridoxine 5'-phosphate biosynthesis; pyridoxine 5'-phosphate from D-erythrose 4-phosphate: step 5/5. Its function is as follows. Catalyzes the complicated ring closure reaction between the two acyclic compounds 1-deoxy-D-xylulose-5-phosphate (DXP) and 3-amino-2-oxopropyl phosphate (1-amino-acetone-3-phosphate or AAP) to form pyridoxine 5'-phosphate (PNP) and inorganic phosphate. In Neisseria meningitidis serogroup B (strain ATCC BAA-335 / MC58), this protein is Pyridoxine 5'-phosphate synthase.